Here is a 176-residue protein sequence, read N- to C-terminus: RING-H2 finger protein ATL14 (176 aa).

Residues 1–26 (MSITIPYDGSISREPSPSPPPPKANT) are disordered. The chain crosses the membrane as a helical span at residues 37 to 57 (FLIGLIMIPVAITAFIFILTS). The RING-type; atypical zinc-finger motif lies at 115–157 (CVVCIDGFRQGQWCRKLPRCGHVFHRKCVDLWLIKVSTCPICR).

The protein belongs to the RING-type zinc finger family. ATL subfamily.

It is found in the membrane. It catalyses the reaction S-ubiquitinyl-[E2 ubiquitin-conjugating enzyme]-L-cysteine + [acceptor protein]-L-lysine = [E2 ubiquitin-conjugating enzyme]-L-cysteine + N(6)-ubiquitinyl-[acceptor protein]-L-lysine.. Its pathway is protein modification; protein ubiquitination. The polypeptide is RING-H2 finger protein ATL14 (ATL14) (Arabidopsis thaliana (Mouse-ear cress)).